We begin with the raw amino-acid sequence, 286 residues long: Homeobox-leucine zipper protein ATHB-20 (286 aa).

Positions 84-143 form a DNA-binding region, homeobox; sequence LGEKKKRLQLEQVKALEKSFELGNKLEPERKIQLAKALGMQPRQIAIWFQNRRARWKTRQ. Positions 144–179 are leucine-zipper; the sequence is LERDYDSLKKQFESLKSDNASLLAYNKKLLAEVMAL.

This sequence belongs to the HD-ZIP homeobox family. Class I subfamily. Widely expressed.

The protein resides in the nucleus. Functionally, probable transcription factor. This chain is Homeobox-leucine zipper protein ATHB-20 (ATHB-20), found in Arabidopsis thaliana (Mouse-ear cress).